The following is a 513-amino-acid chain: Maturase K (513 aa).

The protein belongs to the intron maturase 2 family. MatK subfamily.

Its subcellular location is the plastid. It is found in the chloroplast. Its function is as follows. Usually encoded in the trnK tRNA gene intron. Probably assists in splicing its own and other chloroplast group II introns. The polypeptide is Maturase K (Typha latifolia (Bulrush)).